The sequence spans 229 residues: Nectarin-1 (229 aa).

The signal sequence occupies residues 1-32 (MAAFGINSKIFQSMEMAILFLLAISIDRYCFA). Cys-42 and Cys-57 are disulfide-bonded. A glycan (N-linked (GlcNAc...) asparagine) is linked at Asn-60. The region spanning 69 to 217 (LAISKPGATN…TFQINTEDVQ (149 aa)) is the Cupin type-1 domain. 4 residues coordinate Mn(2+): His-117, His-119, Glu-124, and His-163.

In terms of assembly, monomer. In the absence of manganese, it forms tetrameric and pentameric forms which show superoxide dismutase activity. Requires Mn(2+) as cofactor. Nectary tissues and to a lower level ovary. Not detected in petals, stems, leaves, roots or other floral tissues.

Its subcellular location is the secreted. It is found in the extracellular space. The protein resides in the apoplast. The catalysed reaction is 2 superoxide + 2 H(+) = H2O2 + O2. In terms of biological role, may interact with bacterial adhesins thereby protecting the reproductive tissues from microbial attack. Has no oxalate oxidase activity. This chain is Nectarin-1 (NECI), found in Nicotiana langsdorffii x Nicotiana sanderae (Ornamental tobacco).